The sequence spans 350 residues: Small ribosomal subunit biogenesis GTPase RsgA (350 aa).

Polar residues predominate over residues 1-17; it reads MSKNKLSKGQQRRVNAN. Residues 1–24 are disordered; it reads MSKNKLSKGQQRRVNANHQRRLKT. In terms of domain architecture, CP-type G spans 104-273; it reads TSVLTRPDFY…VIDSPGVREF (170 aa). Residues 160–163 and 214–222 contribute to the GTP site; these read NKID and GQSGVGKSS. Residues cysteine 297, cysteine 302, histidine 304, and cysteine 310 each contribute to the Zn(2+) site.

The protein belongs to the TRAFAC class YlqF/YawG GTPase family. RsgA subfamily. As to quaternary structure, monomer. Associates with 30S ribosomal subunit, binds 16S rRNA. Zn(2+) is required as a cofactor.

It localises to the cytoplasm. Functionally, one of several proteins that assist in the late maturation steps of the functional core of the 30S ribosomal subunit. Helps release RbfA from mature subunits. May play a role in the assembly of ribosomal proteins into the subunit. Circularly permuted GTPase that catalyzes slow GTP hydrolysis, GTPase activity is stimulated by the 30S ribosomal subunit. The chain is Small ribosomal subunit biogenesis GTPase RsgA from Salmonella schwarzengrund (strain CVM19633).